A 177-amino-acid polypeptide reads, in one-letter code: GTP-dependent dephospho-CoA kinase (177 aa).

GTP-binding residues include G25, Y31, D48, V49, V50, D67, K69, E124, and D147.

This sequence belongs to the GTP-dependent DPCK family. In terms of assembly, monomer in solution.

It carries out the reaction 3'-dephospho-CoA + GTP = GDP + CoA + H(+). The protein operates within cofactor biosynthesis; coenzyme A biosynthesis. Catalyzes the GTP-dependent phosphorylation of the 3'-hydroxyl group of dephosphocoenzyme A to form coenzyme A (CoA). Can also use UTP, with lower efficiency and has weak activity with ATP, but shows a strong preference for GTP as the phosphate donor. This Thermococcus kodakarensis (strain ATCC BAA-918 / JCM 12380 / KOD1) (Pyrococcus kodakaraensis (strain KOD1)) protein is GTP-dependent dephospho-CoA kinase.